The primary structure comprises 328 residues: Hydrogenase-2 operon protein HybA (328 aa).

The first 27 residues, 1-27 (MNRRNFIKAASCGALLTGALPSVSHAA), serve as a signal peptide directing secretion. 4Fe-4S ferredoxin-type domains follow at residues 38–68 (LGML…RNPQ), 103–134 (NGYA…KDPK), and 136–165 (GIVH…YDYN). [4Fe-4S] cluster contacts are provided by cysteine 47, cysteine 50, cysteine 53, cysteine 57, cysteine 112, cysteine 115, cysteine 120, cysteine 124, cysteine 145, cysteine 148, cysteine 151, cysteine 155, cysteine 174, cysteine 177, cysteine 193, and cysteine 197.

[4Fe-4S] cluster is required as a cofactor.

It localises to the periplasm. In terms of biological role, participates in the periplasmic electron-transferring activity of hydrogenase 2 during its catalytic turnover. This Escherichia coli O157:H7 protein is Hydrogenase-2 operon protein HybA (hybA).